A 550-amino-acid polypeptide reads, in one-letter code: Chaperonin GroEL (550 aa).

Residues T30 to P33, K51, D87 to T91, G415, N479 to A481, and D495 contribute to the ATP site.

Belongs to the chaperonin (HSP60) family. In terms of assembly, forms a cylinder of 14 subunits composed of two heptameric rings stacked back-to-back. Interacts with the co-chaperonin GroES.

It localises to the cytoplasm. It carries out the reaction ATP + H2O + a folded polypeptide = ADP + phosphate + an unfolded polypeptide.. Functionally, together with its co-chaperonin GroES, plays an essential role in assisting protein folding. The GroEL-GroES system forms a nano-cage that allows encapsulation of the non-native substrate proteins and provides a physical environment optimized to promote and accelerate protein folding. The polypeptide is Chaperonin GroEL (Polaromonas sp. (strain JS666 / ATCC BAA-500)).